A 79-amino-acid polypeptide reads, in one-letter code: Large ribosomal subunit protein uL29 (79 aa).

Belongs to the universal ribosomal protein uL29 family.

This chain is Large ribosomal subunit protein uL29, found in Gluconacetobacter diazotrophicus (strain ATCC 49037 / DSM 5601 / CCUG 37298 / CIP 103539 / LMG 7603 / PAl5).